The chain runs to 1210 residues: Inner capsid protein VP3 (1210 aa).

Residues 1–28 (MPRTSRNVRATEVATTAIPPSNAATDTT) are disordered. The C2H2-type zinc finger occupies 113 to 136 (LRCQQCGAKFSSMTQLAEHVRTEH). The interval 294–319 (PHAGPQVRSVQSQDQQVYSVDSGPDP) is disordered. The span at 299–315 (QVRSVQSQDQQVYSVDS) shows a compositional bias: low complexity.

This sequence belongs to the turreted BTV-fold inner capsid family. In terms of assembly, homodecamer; each decamer is made up of two conformers of VP2, called VP2A and VP2B. 12 homodecamers assemble to form an icosahedral capsid. Interacts with VP6.

It localises to the virion. In terms of biological role, inner capsid protein that self-assembles to form an icosahedral capsid with a T=2 symmetry, which consists of 120 copies of VP2, with channels at each of its five-fold vertices. This capsid constitutes the innermost concentric layer of the viral mature particle. This Aquareovirus A (isolate Chum salmon/Japan/CSRV/1981) (AQRV-A) protein is Inner capsid protein VP3 (S3).